A 488-amino-acid polypeptide reads, in one-letter code: MKFKDLRDFVQQLEQRGELKRIQIPVSPVLEMTEVCDRTLRAKGPALLFEKPTGYDIPVLGNLFGTPERVAMGMGAESVSELREIGKLLAFLKEPEPPKGLKDAWSKLPIFRKIIAMAPKVIKDAPCQEVVIEGDDVDLAMLPVQTCWSGDVAPLITWGLTVTKGPNKDRQNLGIYRQQVIGRNKVIMRWLSHRGGALDFREWCEKHPGQPFPVSVALGADPATILGAVTPVPDSLSEYAFAGLLRDSRTELVKCRGNDLQVPATAEIILEGVIHPGEMADEGPYGDHTGYYNEVDSFPVFTVERITHRIKPIYHSTYTGRPPDEPAILGVALNEVFVPILQKQFPEITDFYLPPEGCSYRMAVVTMKKSYPGHAKRVMLGVWSFLRQFMYTKFVIVTDDDINARDWNDVIWAITTRMDPKRDTVMIDNTPIDYLDFASPVSGLGSKMGLDATHKWPGETTREWGRVIVKDDAVTQRIDAIWNQLGID.

Position 172 (N172) interacts with Mn(2+). Residues 175–177, 189–191, and 194–195 contribute to the prenylated FMN site; these read IYR, RWL, and RG. E238 is a Mn(2+) binding site. Catalysis depends on D287, which acts as the Proton donor.

The protein belongs to the UbiD family. As to quaternary structure, homohexamer. Prenylated FMN is required as a cofactor. The cofactor is Mn(2+).

The protein localises to the cell membrane. It carries out the reaction a 4-hydroxy-3-(all-trans-polyprenyl)benzoate + H(+) = a 2-(all-trans-polyprenyl)phenol + CO2. Its pathway is cofactor biosynthesis; ubiquinone biosynthesis. Functionally, catalyzes the decarboxylation of 3-octaprenyl-4-hydroxy benzoate to 2-octaprenylphenol, an intermediate step in ubiquinone biosynthesis. This is 3-octaprenyl-4-hydroxybenzoate carboxy-lyase from Pseudomonas fluorescens (strain Pf0-1).